Consider the following 118-residue polypeptide: Large ribosomal subunit protein bL19 (118 aa).

It belongs to the bacterial ribosomal protein bL19 family.

In terms of biological role, this protein is located at the 30S-50S ribosomal subunit interface and may play a role in the structure and function of the aminoacyl-tRNA binding site. This is Large ribosomal subunit protein bL19 (rplS) from Serratia marcescens.